We begin with the raw amino-acid sequence, 279 residues long: Energy-coupling factor transporter ATP-binding protein EcfA2 (279 aa).

The region spanning 3-245 (IALENVNFIY…VVFMEEVQLG (243 aa)) is the ABC transporter domain. Position 40-47 (40-47 (GHTGSGKS)) interacts with ATP.

It belongs to the ABC transporter superfamily. Energy-coupling factor EcfA family. Forms a stable energy-coupling factor (ECF) transporter complex composed of 2 membrane-embedded substrate-binding proteins (S component), 2 ATP-binding proteins (A component) and 2 transmembrane proteins (T component).

It is found in the cell membrane. In terms of biological role, ATP-binding (A) component of a common energy-coupling factor (ECF) ABC-transporter complex. Unlike classic ABC transporters this ECF transporter provides the energy necessary to transport a number of different substrates. The protein is Energy-coupling factor transporter ATP-binding protein EcfA2 of Streptococcus pneumoniae serotype 2 (strain D39 / NCTC 7466).